The chain runs to 132 residues: Small ribosomal subunit protein uS8 (132 aa).

It belongs to the universal ribosomal protein uS8 family. Part of the 30S ribosomal subunit. Contacts proteins S5 and S12.

Its function is as follows. One of the primary rRNA binding proteins, it binds directly to 16S rRNA central domain where it helps coordinate assembly of the platform of the 30S subunit. This chain is Small ribosomal subunit protein uS8, found in Lactobacillus helveticus (strain DPC 4571).